We begin with the raw amino-acid sequence, 549 residues long: Probable protein kinase UbiB (549 aa).

The 379-residue stretch at 123-501 folds into the Protein kinase domain; it reads DFNETPLASA…QQQAHKSNYL (379 aa). ATP contacts are provided by residues 129–137 and lysine 152; that span reads LASASISQV. Aspartate 287 acts as the Proton acceptor in catalysis. A run of 2 helical transmembrane segments spans residues 498–518 and 520–540; these read SNYL…LFNQ and ATLL…IIGW.

Belongs to the ABC1 family. UbiB subfamily.

The protein resides in the cell inner membrane. The protein operates within cofactor biosynthesis; ubiquinone biosynthesis [regulation]. Is probably a protein kinase regulator of UbiI activity which is involved in aerobic coenzyme Q (ubiquinone) biosynthesis. In Shewanella oneidensis (strain ATCC 700550 / JCM 31522 / CIP 106686 / LMG 19005 / NCIMB 14063 / MR-1), this protein is Probable protein kinase UbiB.